The primary structure comprises 345 residues: DNA-directed RNA polymerase subunit alpha (345 aa).

Positions 1–234 are alpha N-terminal domain (alpha-NTD); the sequence is MRKNEMSTSK…DLLTTFLYVR (234 aa). The tract at residues 266 to 345 is alpha C-terminal domain (alpha-CTD); that stretch reads LEERVLENRF…DKKIVLNRRK (80 aa).

Belongs to the RNA polymerase alpha chain family. In plastids the minimal PEP RNA polymerase catalytic core is composed of four subunits: alpha, beta, beta', and beta''. When a (nuclear-encoded) sigma factor is associated with the core the holoenzyme is formed, which can initiate transcription.

The protein resides in the plastid. It is found in the chloroplast. It carries out the reaction RNA(n) + a ribonucleoside 5'-triphosphate = RNA(n+1) + diphosphate. DNA-dependent RNA polymerase catalyzes the transcription of DNA into RNA using the four ribonucleoside triphosphates as substrates. This is DNA-directed RNA polymerase subunit alpha from Adiantum capillus-veneris (Maidenhair fern).